Consider the following 26-residue polypeptide: Conotoxin Eb6.17 (26 aa).

Disulfide bonds link Cys-7-Cys-18 and Cys-13-Cys-25.

Belongs to the conotoxin O1 superfamily. As to expression, expressed by the venom duct.

It localises to the secreted. The protein is Conotoxin Eb6.17 (E1) of Conus ebraeus (Hebrew cone).